A 262-amino-acid chain; its full sequence is Ninja-family protein 2 (262 aa).

A disordered region spans residues 49-70; that stretch reads RNSLACNTSKEAAGQSPKEMNA.

Belongs to the Ninja family.

It localises to the nucleus. The protein is Ninja-family protein 2 of Zea mays (Maize).